The primary structure comprises 202 residues: MIIGYARVSSLDQNLERQLENLKTFGAEKIFTEKQSGKSIENRPILQKALNFVRMGDRFIVESIDRLGRNYNEVIHTVNYLKDKEVQLMITSLPMMNEVIGNPLLDKFMKDLIIQILAMVSEQERNESKRRQAQGIQVAKEKGVYKGRPLLYSPNAKDPQKRVIYHRVVEMLEEGQAISKIAKEVNITRQTVYRIKHDNGLS.

Residues 1 to 143 (MIIGYARVSS…QGIQVAKEKG (143 aa)) form the Resolvase/invertase-type recombinase catalytic domain. The active-site O-(5'-phospho-DNA)-serine intermediate is the Ser9.

It belongs to the site-specific recombinase resolvase family.

Its function is as follows. Potential DNA invertase. The polypeptide is Putative transposon Tn552 DNA-invertase bin3 (bin3) (Staphylococcus aureus).